An 89-amino-acid polypeptide reads, in one-letter code: Small ribosomal subunit protein uS15 (89 aa).

This sequence belongs to the universal ribosomal protein uS15 family. As to quaternary structure, part of the 30S ribosomal subunit. Forms a bridge to the 50S subunit in the 70S ribosome, contacting the 23S rRNA.

One of the primary rRNA binding proteins, it binds directly to 16S rRNA where it helps nucleate assembly of the platform of the 30S subunit by binding and bridging several RNA helices of the 16S rRNA. In terms of biological role, forms an intersubunit bridge (bridge B4) with the 23S rRNA of the 50S subunit in the ribosome. This chain is Small ribosomal subunit protein uS15, found in Saccharophagus degradans (strain 2-40 / ATCC 43961 / DSM 17024).